A 283-amino-acid chain; its full sequence is MSSNPSSVEKKLLHYTGKAIADFNMIQRGDRVMVCLSGGKDSFTLLTILNQLRIKSGNKFEIFAFTLDQAQPGWNDACLRQWLAEKSIPHEILTRDTYSIVKEKIPEGKTYCSLCSRLRRGIIYRYAEENGFNKIALGHHRDDLVRTLMMSILYNGDIRSMPPKLLSDNKKHIVIRPLCYVQEKDIITFASEQAFPIIPCNLCGSQENLMRKKVASLIDQLAIENPKVPSNMLHALQSLKPSQLMDQNFWNFKNLEDGLETTQSIQCEEVFNAQEFELEDEKI.

The short motif at 37–42 (SGGKDS) is the PP-loop motif element. [4Fe-4S] cluster-binding residues include cysteine 112, cysteine 115, and cysteine 203.

Belongs to the TtcA family. Homodimer. It depends on Mg(2+) as a cofactor. Requires [4Fe-4S] cluster as cofactor.

The protein localises to the cytoplasm. It carries out the reaction cytidine(32) in tRNA + S-sulfanyl-L-cysteinyl-[cysteine desulfurase] + AH2 + ATP = 2-thiocytidine(32) in tRNA + L-cysteinyl-[cysteine desulfurase] + A + AMP + diphosphate + H(+). It participates in tRNA modification. Functionally, catalyzes the ATP-dependent 2-thiolation of cytidine in position 32 of tRNA, to form 2-thiocytidine (s(2)C32). The sulfur atoms are provided by the cysteine/cysteine desulfurase (IscS) system. This Legionella pneumophila subsp. pneumophila (strain Philadelphia 1 / ATCC 33152 / DSM 7513) protein is tRNA-cytidine(32) 2-sulfurtransferase.